The sequence spans 349 residues: Alanine racemase (349 aa).

Catalysis depends on lysine 35, which acts as the Proton acceptor; specific for D-alanine. Lysine 35 carries the N6-(pyridoxal phosphate)lysine modification. Residue arginine 130 coordinates substrate. Catalysis depends on tyrosine 244, which acts as the Proton acceptor; specific for L-alanine. Methionine 292 is a binding site for substrate.

This sequence belongs to the alanine racemase family. Requires pyridoxal 5'-phosphate as cofactor.

The catalysed reaction is L-alanine = D-alanine. Its pathway is amino-acid biosynthesis; D-alanine biosynthesis; D-alanine from L-alanine: step 1/1. Its function is as follows. Catalyzes the interconversion of L-alanine and D-alanine. May also act on other amino acids. In Cereibacter sphaeroides (strain ATCC 17023 / DSM 158 / JCM 6121 / CCUG 31486 / LMG 2827 / NBRC 12203 / NCIMB 8253 / ATH 2.4.1.) (Rhodobacter sphaeroides), this protein is Alanine racemase (alr).